We begin with the raw amino-acid sequence, 150 residues long: MKVIFLADVKGKGKKGEIKEVPTGYAQNFLIKKNLAKEATAQAVGELRGKQKSEEKAHAEMIAEGKAIKAQLEAEETVVEFVEKVGPDGRTFGSITNKKIAEELQKQFGIKIDKRHIQVQAPIRAVGLIDVPVKIYQDITSVINLRVKEG.

Belongs to the bacterial ribosomal protein bL9 family.

Its function is as follows. Binds to the 23S rRNA. The sequence is that of Large ribosomal subunit protein bL9 from Streptococcus pneumoniae (strain CGSP14).